The following is a 629-amino-acid chain: tRNA uridine 5-carboxymethylaminomethyl modification enzyme MnmG (629 aa).

FAD-binding positions include 14 to 19 (GAGHAG), V126, and S181. 273–287 (GPRYCPSIEDKVVRF) provides a ligand contact to NAD(+). Q370 provides a ligand contact to FAD.

The protein belongs to the MnmG family. In terms of assembly, homodimer. Heterotetramer of two MnmE and two MnmG subunits. FAD serves as cofactor.

The protein resides in the cytoplasm. NAD-binding protein involved in the addition of a carboxymethylaminomethyl (cmnm) group at the wobble position (U34) of certain tRNAs, forming tRNA-cmnm(5)s(2)U34. The sequence is that of tRNA uridine 5-carboxymethylaminomethyl modification enzyme MnmG from Geobacillus thermodenitrificans (strain NG80-2).